Reading from the N-terminus, the 336-residue chain is Cyclin-H1-1 (336 aa).

A2 is subject to N-acetylalanine. The tract at residues 297–336 (KSCLGHSSSHDESKKREKRSKHKSHRSSNDTPNGAPPPIG) is disordered. The span at 312 to 322 (REKRSKHKSHR) shows a compositional bias: basic residues.

The protein belongs to the cyclin family. In terms of assembly, interacts with CDKA-1, CDKD-2 and CDKD-3, but not CDKD-1 and CDKF-1.

It localises to the cytoplasm. It is found in the nucleus. Functionally, associates with CDK-2 and CDK-3 and activates the CDK kinases. This chain is Cyclin-H1-1 (CYCH1-1), found in Arabidopsis thaliana (Mouse-ear cress).